A 208-amino-acid polypeptide reads, in one-letter code: Small ribosomal subunit protein uS5 (208 aa).

The disordered stretch occupies residues 1-38 (MPGRERRDGGRSADDNQKKNDRRGGRRDDRRNQQQDER). Residues 41–104 (YIERVVTINR…EEARKNFFRV (64 aa)) enclose the S5 DRBM domain.

Belongs to the universal ribosomal protein uS5 family. As to quaternary structure, part of the 30S ribosomal subunit. Contacts proteins S4 and S8.

Functionally, with S4 and S12 plays an important role in translational accuracy. In terms of biological role, located at the back of the 30S subunit body where it stabilizes the conformation of the head with respect to the body. This chain is Small ribosomal subunit protein uS5, found in Corynebacterium diphtheriae (strain ATCC 700971 / NCTC 13129 / Biotype gravis).